The following is a 367-amino-acid chain: Glycolate oxidase 1 (367 aa).

An N-acetylmethionine modification is found at Met-1. Tyr-24 lines the glyoxylate pocket. Residues 77-79 (PTA), Ser-106, 127-129 (QLY), and Thr-155 contribute to the FMN site. Glyoxylate is bound at residue Tyr-129. Arg-164 contacts glyoxylate. FMN contacts are provided by Lys-230 and Ser-252. Glyoxylate is bound by residues His-254 and Arg-257. Catalysis depends on His-254, which acts as the Proton acceptor. FMN contacts are provided by residues 285-289 (DGGVR) and 308-309 (GR).

Belongs to the FMN-dependent alpha-hydroxy acid dehydrogenase family. Homotetramer. FMN is required as a cofactor.

The protein resides in the peroxisome. It catalyses the reaction glycolate + O2 = glyoxylate + H2O2. Its pathway is photosynthesis; photorespiration; glycine from 2-phosphoglycolate: step 2/3. Functionally, catalyzes the oxidation of glycolate to glyoxylate, with a reduction of O2 to H2O2. Is a key enzyme in photorespiration in green plants. In Arabidopsis thaliana (Mouse-ear cress), this protein is Glycolate oxidase 1 (GLO1).